A 304-amino-acid polypeptide reads, in one-letter code: Putative S-adenosyl-L-methionine-dependent methyltransferase YktD (304 aa).

S-adenosyl-L-methionine-binding positions include D134 and 163 to 164 (DF).

Belongs to the UPF0677 family.

May be involved in polyketide synthesis. This chain is Putative S-adenosyl-L-methionine-dependent methyltransferase YktD (yktD), found in Bacillus subtilis (strain 168).